Consider the following 439-residue polypeptide: Histidinol dehydrogenase (439 aa).

NAD(+) contacts are provided by Y127, Q185, and N208. Positions 234, 256, and 259 each coordinate substrate. The Zn(2+) site is built by Q256 and H259. Residues E323 and H324 each act as proton acceptor in the active site. Residues H324, D357, E411, and H416 each contribute to the substrate site. D357 is a Zn(2+) binding site. H416 contributes to the Zn(2+) binding site.

The protein belongs to the histidinol dehydrogenase family. Zn(2+) serves as cofactor.

It carries out the reaction L-histidinol + 2 NAD(+) + H2O = L-histidine + 2 NADH + 3 H(+). It functions in the pathway amino-acid biosynthesis; L-histidine biosynthesis; L-histidine from 5-phospho-alpha-D-ribose 1-diphosphate: step 9/9. Its function is as follows. Catalyzes the sequential NAD-dependent oxidations of L-histidinol to L-histidinaldehyde and then to L-histidine. This Aliivibrio fischeri (strain ATCC 700601 / ES114) (Vibrio fischeri) protein is Histidinol dehydrogenase.